We begin with the raw amino-acid sequence, 321 residues long: Protein-L-isoaspartate O-methyltransferase (321 aa).

The segment covering 21–31 (KPAERQREKRI) has biased composition (basic and acidic residues). The interval 21–65 (KPAERQREKRISSGVNAVSLPTPARTASAERASSTPAPGPGPQRV) is disordered. The segment covering 41–56 (PTPARTASAERASSTP) has biased composition (low complexity). Residue serine 153 is part of the active site.

It belongs to the methyltransferase superfamily. L-isoaspartyl/D-aspartyl protein methyltransferase family.

The protein resides in the cytoplasm. The enzyme catalyses [protein]-L-isoaspartate + S-adenosyl-L-methionine = [protein]-L-isoaspartate alpha-methyl ester + S-adenosyl-L-homocysteine. Its function is as follows. Catalyzes the methyl esterification of L-isoaspartyl residues in peptides and proteins that result from spontaneous decomposition of normal L-aspartyl and L-asparaginyl residues. It plays a role in the repair and/or degradation of damaged proteins. This Ralstonia nicotianae (strain ATCC BAA-1114 / GMI1000) (Ralstonia solanacearum) protein is Protein-L-isoaspartate O-methyltransferase.